A 940-amino-acid chain; its full sequence is Gamma-aminobutyric acid type B receptor subunit 2 (940 aa).

Residues Met1–Gly40 form the signal peptide. Over Trp41–Ser482 the chain is Extracellular. Residue Asn89 is glycosylated (N-linked (GlcNAc...) asparagine). 3 disulfide bridges follow: Cys107–Cys134, Cys236–Cys265, and Cys264–Cys301. Asn297, Asn388, Asn403, and Asn452 each carry an N-linked (GlcNAc...) asparagine glycan. Residues Ile483–Ile503 form a helical membrane-spanning segment. At Lys504–Leu521 the chain is on the cytoplasmic side. A helical transmembrane segment spans residues Ile522–Phe542. Over Val543 to Thr550 the chain is Extracellular. Residues Leu551–Phe571 form a helical membrane-spanning segment. Residues Ala572 to Leu596 are Cytoplasmic-facing. The helical transmembrane segment at Leu597–Val617 threads the bilayer. Residues Asp618–Thr653 lie on the Extracellular side of the membrane. A helical membrane pass occupies residues Ile654–Ala674. Residues Trp675–Tyr690 are Cytoplasmic-facing. Residues Ile691–Leu711 traverse the membrane as a helical segment. At Thr712–Gln719 the chain is on the extracellular side. Residues Phe720–Val740 form a helical membrane-spanning segment. At Pro741–Leu940 the chain is on the cytoplasmic side. The disordered stretch occupies residues Thr762 to Gly789. The span at Thr772 to Arg786 shows a compositional bias: polar residues. A phosphoserine mark is found at Ser775 and Ser778. A coiled-coil region spans residues Gln781–Thr818. Thr818 carries the phosphothreonine modification. 6 positions are modified to phosphoserine: Ser883, Ser892, Ser912, Ser915, Ser919, and Ser923.

The protein belongs to the G-protein coupled receptor 3 family. GABA-B receptor subfamily. Heterodimer of GABBR1 and GABBR2. Homodimers may form, but are inactive. Interacts (via C-terminus) with ATF4 (via leucine zipper domain).

Its subcellular location is the cell membrane. The protein localises to the postsynaptic cell membrane. In terms of biological role, component of a heterodimeric G-protein coupled receptor for GABA, formed by GABBR1 and GABBR2. Within the heterodimeric GABA receptor, only GABBR1 seems to bind agonists, while GABBR2 mediates coupling to G proteins. Ligand binding causes a conformation change that triggers signaling via guanine nucleotide-binding proteins (G proteins) and modulates the activity of down-stream effectors, such as adenylate cyclase. Signaling inhibits adenylate cyclase, stimulates phospholipase A2, activates potassium channels, inactivates voltage-dependent calcium-channels and modulates inositol phospholipid hydrolysis. Plays a critical role in the fine-tuning of inhibitory synaptic transmission. Pre-synaptic GABA receptor inhibits neurotransmitter release by down-regulating high-voltage activated calcium channels, whereas postsynaptic GABA receptor decreases neuronal excitability by activating a prominent inwardly rectifying potassium (Kir) conductance that underlies the late inhibitory postsynaptic potentials. Not only implicated in synaptic inhibition but also in hippocampal long-term potentiation, slow wave sleep, muscle relaxation and antinociception. Interacts with KCTD8, KCTD12 and KCTD16; this interaction determines the pharmacology and kinetics of the receptor response, the KCTD proteins markedly accelerating the GABA-B response, although to different extents. This chain is Gamma-aminobutyric acid type B receptor subunit 2 (Gabbr2), found in Mus musculus (Mouse).